A 270-amino-acid chain; its full sequence is MRLIIQPDYQSVSQWAAHYVAAKIKAANPTPEKPFVLGCPTGSSPLGMYKALIDLNKKGIVSFQNVVTFNMDEYVGLPKEHPESYYSFMWNNFFSHIDIKPENTNILNGNAADLDAECARYEEKIKSYGGIDLFMGGIGPDGHIAFNEPGSSLSSRTRQKTLTTDTIIANSRFFDNDINKVPKTSLTVGVGTVLSAREVMIIVNGHNKARALYHAVEGAITQMWTISALQMHEKGIIVCDDAATAELKVGTYRYFKDIEADHLDPQSLLK.

The active-site Proton acceptor; for enolization step is Asp-72. Asp-141 (for ring-opening step) is an active-site residue. The active-site Proton acceptor; for ring-opening step is the His-143. The For ring-opening step role is filled by Glu-148.

This sequence belongs to the glucosamine/galactosamine-6-phosphate isomerase family. NagB subfamily.

It carries out the reaction alpha-D-glucosamine 6-phosphate + H2O = beta-D-fructose 6-phosphate + NH4(+). It participates in amino-sugar metabolism; N-acetylneuraminate degradation; D-fructose 6-phosphate from N-acetylneuraminate: step 5/5. Allosterically activated by N-acetylglucosamine 6-phosphate (GlcNAc6P). In terms of biological role, catalyzes the reversible isomerization-deamination of glucosamine 6-phosphate (GlcN6P) to form fructose 6-phosphate (Fru6P) and ammonium ion. The polypeptide is Glucosamine-6-phosphate deaminase (Bacteroides fragilis (strain ATCC 25285 / DSM 2151 / CCUG 4856 / JCM 11019 / LMG 10263 / NCTC 9343 / Onslow / VPI 2553 / EN-2)).